Here is a 71-residue protein sequence, read N- to C-terminus: MPIVKVRENEPFEVALRRFKRSCEKAGVLSEIRRREHYEKPTQERKRKAAAAVKRHMKRLSREQARRRRLY.

Positions 37-71 (HYEKPTQERKRKAAAAVKRHMKRLSREQARRRRLY) are disordered. Basic residues predominate over residues 45-71 (RKRKAAAAVKRHMKRLSREQARRRRLY).

Belongs to the bacterial ribosomal protein bS21 family.

The protein is Small ribosomal subunit protein bS21 of Alkalilimnicola ehrlichii (strain ATCC BAA-1101 / DSM 17681 / MLHE-1).